A 548-amino-acid chain; its full sequence is Chaperonin GroEL (548 aa).

Residues 30 to 33 (TLGP), lysine 51, 87 to 91 (DGTTT), glycine 415, and aspartate 495 each bind ATP.

Belongs to the chaperonin (HSP60) family. In terms of assembly, forms a cylinder of 14 subunits composed of two heptameric rings stacked back-to-back. Interacts with the co-chaperonin GroES.

It localises to the cytoplasm. It catalyses the reaction ATP + H2O + a folded polypeptide = ADP + phosphate + an unfolded polypeptide.. Together with its co-chaperonin GroES, plays an essential role in assisting protein folding. The GroEL-GroES system forms a nano-cage that allows encapsulation of the non-native substrate proteins and provides a physical environment optimized to promote and accelerate protein folding. The chain is Chaperonin GroEL from Colwellia psychrerythraea (strain 34H / ATCC BAA-681) (Vibrio psychroerythus).